The primary structure comprises 337 residues: HTH-type transcriptional regulator DegA (337 aa).

An HTH lacI-type domain is found at 1–57 (MKTTIYDVAKAAGVSITTVSRVINNTGRISDKTRQKVMNVMNEMAYTPNVHAAALTG). The segment at residues 5-24 (IYDVAKAAGVSITTVSRVIN) is a DNA-binding region (H-T-H motif). The disordered stretch occupies residues 300 to 319 (AERHRTAGRSNRGKRKAKQK).

Involved in the control of degradation of B.subtilis amidophosphoribosyltransferase (purF). Probably activates the gene for a degradative protease. The sequence is that of HTH-type transcriptional regulator DegA (degA) from Bacillus subtilis (strain 168).